We begin with the raw amino-acid sequence, 372 residues long: Ribosomal RNA small subunit methyltransferase H (372 aa).

S-adenosyl-L-methionine-binding positions include 44–46 (GGH), Asp-63, Leu-97, Asp-111, and Gln-118. Positions 315–334 (RAAERLDPTAEQRRRTDRER) are enriched in basic and acidic residues. Positions 315–372 (RAAERLDPTAEQRRRTDRERYRRRVRAMHQPGTGSAVRRPTPGDDGTGTDEEGEGHDS) are disordered. The segment covering 361-372 (TGTDEEGEGHDS) has biased composition (acidic residues).

This sequence belongs to the methyltransferase superfamily. RsmH family.

The protein localises to the cytoplasm. The catalysed reaction is cytidine(1402) in 16S rRNA + S-adenosyl-L-methionine = N(4)-methylcytidine(1402) in 16S rRNA + S-adenosyl-L-homocysteine + H(+). In terms of biological role, specifically methylates the N4 position of cytidine in position 1402 (C1402) of 16S rRNA. The protein is Ribosomal RNA small subunit methyltransferase H of Salinispora arenicola (strain CNS-205).